Here is a 408-residue protein sequence, read N- to C-terminus: Zinc finger protein 764 (408 aa).

The 72-residue stretch at 26–97 (VSFADVAVYF…AAQDPEVAKC (72 aa)) folds into the KRAB domain. The interval 91–167 (DPEVAKCQTQ…GRPSLCAHPP (77 aa)) is disordered. 7 consecutive C2H2-type zinc fingers follow at residues 175 to 197 (HGCYVCGKSFAWRSTLVEHVYSH), 203 to 225 (FHCTDCGKGFGHASSLSKHRAIH), 231 to 253 (HRCLECGRAFTQRSALTSHLRVH), 259 to 281 (YGCADCGRRFSQSSALYQHRRVH), 287 to 309 (FPCPDCGRAFAYPSDLRRHVRTH), 315 to 337 (YPCPDCGRCFRQSSEMAAHRRTH), and 343 to 365 (YPCPQCGRRFGQKSAVAKHQWVH).

The protein belongs to the krueppel C2H2-type zinc-finger protein family. Interacts (via KRAB domain) with NR3C1/GR (via NR LBD domain); the interaction regulates transcription factor activity of NR3C1 by directing its actions toward certain biologic pathways.

The protein resides in the nucleus. Zinc finger protein that functions as a cofactor for steroid hormone receptors, such as NR3C1/GR. Directs NR3C1/GR transcriptional activity toward specific biologic pathways by changing NR3C1/GR binding and transcriptional activity on the glucocorticoid-responsive genes. The sequence is that of Zinc finger protein 764 from Homo sapiens (Human).